Reading from the N-terminus, the 104-residue chain is MMLKPSIDTLLDKVPSKYSLVILEAKRAHELEAGAKPTQEFTSVKSTLRALEEIESGNVVIHPDPEAKREAVRRRAEEAKRLAEEEERKIKAQIAKEKEEGEKI.

The protein belongs to the RNA polymerase subunit omega family. In terms of assembly, the RNAP catalytic core consists of 2 alpha, 1 beta, 1 beta' and 1 omega subunit. When a sigma factor is associated with the core the holoenzyme is formed, which can initiate transcription.

The enzyme catalyses RNA(n) + a ribonucleoside 5'-triphosphate = RNA(n+1) + diphosphate. Its function is as follows. Promotes RNA polymerase assembly. Latches the N- and C-terminal regions of the beta' subunit thereby facilitating its interaction with the beta and alpha subunits. The chain is DNA-directed RNA polymerase subunit omega from Streptococcus suis (strain 05ZYH33).